Reading from the N-terminus, the 540-residue chain is Receptor-interacting serine/threonine-protein kinase 2 (540 aa).

A Protein kinase domain is found at 18–294; that stretch reads LADLRYLSRG…KCLIELEPVL (277 aa). Residues 24–32 and Lys47 each bind ATP; that span reads LSRGASGTV. A helix alphaC region spans residues 65–73; it reads REAEILHKA. Catalysis depends on Asp146, which acts as the Proton acceptor. An activation segment (AS) region spans residues 167–193; it reads LSKWRMMSLSQSRSSKSAPEGGTIVYM. Ser168 bears the Phosphoserine mark. Ser174 carries the post-translational modification Phosphoserine; alternate. Ser176 is modified (phosphoserine; by autocatalysis). Ser178 is modified (phosphoserine; alternate). Phosphoserine is present on Ser180. Ser181 carries the phosphoserine; alternate modification. Lys209 participates in a covalent cross-link: Glycyl lysine isopeptide (Lys-Gly) (interchain with G-Cter in ubiquitin). The tract at residues 318 to 367 is disordered; it reads SRTVHLSDKKKRELSPNIPVNSGPREESCGSSQLHKTSGSPGTSRSLSAP. Positions 322 to 331 are enriched in basic and acidic residues; sequence HLSDKKKREL. A compositionally biased stretch (polar residues) spans 346–366; that stretch reads CGSSQLHKTSGSPGTSRSLSA. Ser363 and Ser391 each carry phosphoserine. The region spanning 432–524 is the CARD domain; that stretch reads GIAQQWIQSK…LQPYPEILVL (93 aa). Tyr472 is subject to Phosphotyrosine; by autocatalysis. Phosphoserine occurs at positions 525, 527, and 529. A Glycyl lysine isopeptide (Lys-Gly) (interchain with G-Cter in ubiquitin) cross-link involves residue Lys536. Ser537 bears the Phosphoserine mark.

The protein belongs to the protein kinase superfamily. TKL Ser/Thr protein kinase family. As to quaternary structure, interacts (via CARD domain) with NOD2 (via CARD domain). Interacts (via CARD domain) with NOD1 (via CARD domain). Homooligomer; following interaction with NOD1 or NOD2, homooligomerizes via its CARD domain and forms long filaments named RIPosomes. Found in a signaling complex consisting of at least ARHGEF2, NOD2 and RIPK2. Interacts with ARHGEF2; the interaction mediates tyrosine phosphorylation of RIPK2 by Src kinase CSK. Interacts with MAP3K4; this interaction sequesters RIPK2 from the NOD2 signaling pathway. Interacts with IKBKG/NEMO. The polyubiquitinated protein interacts with MAP3K7/TAK1; interaction is indirect and is mediated by TAB2 and TAB3 that bind to polyubiquitin chains attached to RIPK2. Binds to CFLAR/CLARP and CASP1 via their CARD domains. Binds to BIRC3/c-IAP1 and BIRC2/c-IAP2, TRAF1, TRAF2, TRAF5 and TRAF6. Interacts with NLRP10. Interacts with CARD9. Interacts with INAVA; the interaction takes place upon PRR stimulation. Interacts (via CARD domain) with NGFR (via death domain). Interacts with IRGM; promoting RIPK2 degradation. Post-translationally, polyubiquitinated via both 'Lys-63'- and 'Met-1'-linked polyubiquitin following recruitment by NOD1 or NOD2, creating docking sites for downstream effectors, triggering activation of the NF-kappa-B and MAP kinases signaling. 'Lys-63'-linked polyubiquitination by XIAP is essential for NOD2 signaling and promotes recruitment of the LUBAC complex. Also polyubiquitinated with 'Lys-63'-linked chains by PELI3, BIRC2/c-IAP1 and BIRC3/c-IAP2. Ubiquitinated on Lys-209 via 'Lys-63'-linked by ITCH. Undergoes 'Lys-63'-linked deubiquitination by MYSM1 to attenuate NOD2-mediated inflammation and tissue damage. Polyubiquitinated with 'Lys-63'-linked chains in response to Shigella infection, promoting its SQSTM1/p62-dependent autophagic degradation. Undergoes 'Met-1'-linked polyubiquitination; the head-to-tail linear polyubiquitination is mediated by the LUBAC complex in response to NOD2 stimulation 'Met-1'-linked polyubiquitination. 'Lys-63'-linked polyubiquitination by XIAP is required for recruimtent of the LUBAC complex and subsequent. Linear polyubiquitination is restricted by FAM105B/otulin, probably to limit NOD2-dependent pro-inflammatory signaling activation of NF-kappa-B. Autophosphorylated. Phosphorylated at Ser-176, either via autophosphorylation or by LRRK2, enhancing activity. Autophosphorylation at Tyr-472 is required for effective NOD2 signaling. Autophosphorylation is however not essential for NOD2 signaling. In terms of processing, degraded via selective autophagy following interaction with IRGM. IRGM promotes NOD1/NOD2-RIPK2 RIPosome recruitment to autophagosome membranes. RIPK2 biquitinated via 'Lys-63'-linked chains is then recognized by SQSTM1/p62, leading to the SQSTM1/p62-dependent autophagic degradation of the NOD1/NOD2-RIPK2 RIPosome.

It localises to the cytoplasm. Its subcellular location is the cell membrane. The protein resides in the endoplasmic reticulum. The enzyme catalyses L-seryl-[protein] + ATP = O-phospho-L-seryl-[protein] + ADP + H(+). It catalyses the reaction L-threonyl-[protein] + ATP = O-phospho-L-threonyl-[protein] + ADP + H(+). It carries out the reaction L-tyrosyl-[protein] + ATP = O-phospho-L-tyrosyl-[protein] + ADP + H(+). In the inactive state, the helix alphaC is packed against the helical, non-phosphorylated activation segment (AS). Upon activation, helix alphaC is displaced and the phosphorylated AS becomes disordered. Its function is as follows. Serine/threonine/tyrosine-protein kinase that plays an essential role in modulation of innate and adaptive immune responses. Acts as a key effector of NOD1 and NOD2 signaling pathways: upon activation by bacterial peptidoglycans, NOD1 and NOD2 oligomerize and recruit RIPK2 via CARD-CARD domains, leading to the formation of RIPK2 filaments. Once recruited, RIPK2 autophosphorylates and undergoes 'Lys-63'-linked polyubiquitination by E3 ubiquitin ligases XIAP, BIRC2 and BIRC3, as well as 'Met-1'-linked (linear) polyubiquitination by the LUBAC complex, becoming a scaffolding protein for downstream effectors. 'Met-1'-linked polyubiquitin chains attached to RIPK2 recruit IKBKG/NEMO, which undergoes 'Lys-63'-linked polyubiquitination in a RIPK2-dependent process. 'Lys-63'-linked polyubiquitin chains attached to RIPK2 serve as docking sites for TAB2 and TAB3 and mediate the recruitment of MAP3K7/TAK1 to IKBKG/NEMO, inducing subsequent activation of IKBKB/IKKB. In turn, NF-kappa-B is released from NF-kappa-B inhibitors and translocates into the nucleus where it activates the transcription of hundreds of genes involved in immune response, growth control, or protection against apoptosis. The protein kinase activity is dispensable for the NOD1 and NOD2 signaling pathways. Contributes to the tyrosine phosphorylation of the guanine exchange factor ARHGEF2 through Src tyrosine kinase leading to NF-kappa-B activation by NOD2. Also involved in adaptive immunity: plays a role during engagement of the T-cell receptor (TCR) in promoting BCL10 phosphorylation and subsequent NF-kappa-B activation. Plays a role in the inactivation of RHOA in response to NGFR signaling. This chain is Receptor-interacting serine/threonine-protein kinase 2 (RIPK2), found in Bos taurus (Bovine).